Reading from the N-terminus, the 332-residue chain is Beta-ketoacyl-[acyl-carrier-protein] synthase III 2 (332 aa).

Residues C115 and H252 contribute to the active site. Residues 253–257 (SANLR) are ACP-binding. N282 is a catalytic residue.

This sequence belongs to the thiolase-like superfamily. FabH family. Homodimer.

It localises to the cytoplasm. The catalysed reaction is malonyl-[ACP] + acetyl-CoA + H(+) = 3-oxobutanoyl-[ACP] + CO2 + CoA. It functions in the pathway lipid metabolism; fatty acid biosynthesis. Functionally, catalyzes the condensation reaction of fatty acid synthesis by the addition to an acyl acceptor of two carbons from malonyl-ACP. Catalyzes the first condensation reaction which initiates fatty acid synthesis and may therefore play a role in governing the total rate of fatty acid production. Possesses both acetoacetyl-ACP synthase and acetyl transacylase activities. Its substrate specificity determines the biosynthesis of branched-chain and/or straight-chain of fatty acids. The chain is Beta-ketoacyl-[acyl-carrier-protein] synthase III 2 from Halalkalibacterium halodurans (strain ATCC BAA-125 / DSM 18197 / FERM 7344 / JCM 9153 / C-125) (Bacillus halodurans).